The chain runs to 216 residues: Somatotropin (216 aa).

The signal sequence occupies residues 1–26; the sequence is MAAGSWTAGLLAFALLCLPWPQEASA. Histidine 45 is a binding site for Zn(2+). A disulfide bond links cysteine 78 and cysteine 189. Serine 131 carries the phosphoserine modification. Zn(2+) is bound at residue glutamate 198. Cysteines 206 and 214 form a disulfide.

The protein belongs to the somatotropin/prolactin family.

It localises to the secreted. In terms of biological role, plays an important role in growth control. Its major role in stimulating body growth is to stimulate the liver and other tissues to secrete IGF1. It stimulates both the differentiation and proliferation of myoblasts. It also stimulates amino acid uptake and protein synthesis in muscle and other tissues. The chain is Somatotropin (GH1) from Oryctolagus cuniculus (Rabbit).